A 670-amino-acid chain; its full sequence is WD repeat-containing protein 48 homolog (670 aa).

7 WD repeats span residues 13–52 (RHRNGVNALQLDPVNGRLYSAGRDAIIRVWNSTQTSSQEP), 59–98 (HHNDWVNDIVLCCGGRNLISASCDTTVKVWNAHKGFCMST), 101–140 (THRDYVQALAYAKDREQVASAGLDKAIFLWDVNTLTALTA), 152–191 (GSKDSIYSLAMNPSGTIIVSGSTENTLRIWDPRTCNKIAK), 194–233 (GHTENVKALVVSEDGTQVVSGSSDGKIKLWSIGQQRCIQT), 236–275 (VHSEGVWALLMTDNFSHVISGSRDKKIVMTELRNPTNSVL), and 278–317 (EERAPVLSLCYNIDQTGIWATTWNSDVRCWKLNKTDKLSN). The segment at 321–348 (SSNSSINSGGGGDGTPVTNSASNATPAS) is disordered. The span at 338-348 (TNSASNATPAS) shows a compositional bias: low complexity. Residues 359-398 (KGGAAIKKYHVLNDKRFMLTKDSEQNVAIYDVLKVKKVED) form a WD 8 repeat. Over residues 613–625 (GGGGGSSTGGGGN) the composition is skewed to gly residues. Positions 613 to 645 (GGGGGSSTGGGGNSNSSQNNSQSDANSEGSQVP) are disordered. A compositionally biased stretch (low complexity) spans 626–635 (SNSSQNNSQS).

Belongs to the WD repeat WDR48 family. As to quaternary structure, catalytic component of the Usp12-46 deubiquitylase complex consisting of Usp12-46, Wdr20 and Uaf1; regulatory subunit that, together wtih Wdr20, stabilizes Usp12-46. The Usp12-46 deubiquitylase complex associates with arr/arrow; the interaction leads to deubiquitination and stabilization of arr/arrow.

Its function is as follows. Regulatory component of the Usp12-46 deubiquitylase complex. activates deubiquitination by increasing the catalytic turnover without increasing the affinity of deubiquitinating enzymes for the substrate. The complex deubiquitylates the wg/wingless-signaling receptor arr/arrow, which stabilizes the receptor and increases its concentration at the cell surface; this enhances the sensitivity of cells to wg/wingless-signal stimulation. This increases the amplitude and spatial range of the signaling response to the wg/wingless morphogen gradient, facilitating the precise concentration-dependent regulation of its target genes. Together with Wdr20 and Usp12-46 required for wg/wingless-mediated signaling in the wing imaginal disc and for wg/wingless-dependent regulation of intestinal stem cell proliferation. This chain is WD repeat-containing protein 48 homolog, found in Culex quinquefasciatus (Southern house mosquito).